Here is an 859-residue protein sequence, read N- to C-terminus: DNA mismatch repair protein MutS (859 aa).

612–619 is a binding site for ATP; it reads GPNMGGKS. A disordered region spans residues 797 to 822; that stretch reads SKPLAPSATPPSSYAAPSPAAAPAQA.

This sequence belongs to the DNA mismatch repair MutS family.

In terms of biological role, this protein is involved in the repair of mismatches in DNA. It is possible that it carries out the mismatch recognition step. This protein has a weak ATPase activity. The chain is DNA mismatch repair protein MutS from Alcanivorax borkumensis (strain ATCC 700651 / DSM 11573 / NCIMB 13689 / SK2).